The following is a 498-amino-acid chain: Nucleobase transporter PlAzg2 (498 aa).

13 helical membrane-spanning segments follow: residues 88–108 (LLAG…NSSI), 118–138 (AGII…GLWG), 142–162 (LVIV…VQGM), 169–189 (ALAA…TSLV), 203–223 (AISV…GGVI), 236–256 (FADP…ILYI), 259–279 (VPGN…LFKA), 312–332 (TLVI…VGLI), 357–377 (ILSG…AAGI), 388–408 (IATG…TLVP), 412–432 (VAPI…HISF), 443–463 (FIIA…IGFI), and 478–498 (VKPL…LQTM).

It belongs to the nucleobase:cation symporter-2 (NCS2) (TC 2.A.40) family. Azg-like subfamily.

Its subcellular location is the cell membrane. Its activity is regulated as follows. Inhibited by the proton gradient disruptor carbonyl cyanide m-chlorophenylhydrazone (CCCP), but not by the sodium gradient disruptor ouabain. Functionally, transports adenine, guanine, hypoxanthine, xanthine, cytosine and uracil. Transport is probably proton-dependent. The sequence is that of Nucleobase transporter PlAzg2 from Paenibacillus larvae subsp. larvae (strain NRRL B-3650 / LMG 16245).